Consider the following 535-residue polypeptide: BAR/IMD domain-containing adapter protein 2 (535 aa).

The IMD domain maps to 1-250 (MSLSRSEEMH…VQLMQQMANS (250 aa)). Residues 88–153 (NQLEETLKSF…LRKKSQGSKN (66 aa)) are a coiled coil. S262, S324, S326, and S337 each carry phosphoserine. Residues 299-370 (VMNGVAGPDS…TLPRSSSMAA (72 aa)) are disordered. Positions 321–335 (QPKSLSPPQSQSKLS) are enriched in low complexity. Residue T341 is modified to Phosphothreonine. At S347 the chain carries Phosphoserine. Residues 349 to 368 (TPKNSYATTENKTLPRSSSM) show a composition bias toward polar residues. Residue T361 is modified to Phosphothreonine. 4 positions are modified to phosphoserine: S367, S385, S396, and S455. The SH3 domain occupies 375-438 (NGRMRVKAIF…PFSYTRVLDS (64 aa)). The tract at residues 445–477 (HMSLQQGKSSSTGNLLDKDDLALPPPDYGTSSR) is disordered. A compositionally biased stretch (polar residues) spans 447-458 (SLQQGKSSSTGN).

Homodimer. Interacts with CDC42 and RAC1 that have been activated by GTP binding. Binds DIAPH1. Interacts with ATN1, ADGRB1, SHANK1, SHANK2, SHANK3, TIAM1, WASF1 and WASF2. Interacts with ENAH after recruitment of CDC42. Interacts with EPS8. Post-translationally, phosphorylated on tyrosine residues by INSR in response to insulin treatment. Detected in liver, brain, olfactory bulb, brain cortex, caudate putamen, hypothalamus and cerebellum.

It is found in the cytoplasm. The protein resides in the membrane. The protein localises to the cell projection. It localises to the filopodium. Its subcellular location is the ruffle. It is found in the cytoskeleton. Functionally, adapter protein that links membrane-bound small G-proteins to cytoplasmic effector proteins. Necessary for CDC42-mediated reorganization of the actin cytoskeleton and for RAC1-mediated membrane ruffling. Involved in the regulation of the actin cytoskeleton by WASF family members and the Arp2/3 complex. Plays a role in neurite growth. Acts syngeristically with ENAH to promote filipodia formation. Plays a role in the reorganization of the actin cytoskeleton in response to bacterial infection. Participates in actin bundling when associated with EPS8, promoting filopodial protrusions. The sequence is that of BAR/IMD domain-containing adapter protein 2 (Baiap2) from Mus musculus (Mouse).